We begin with the raw amino-acid sequence, 394 residues long: Chorismate synthase (394 aa).

Residues Arg-40 and Arg-46 each coordinate NADP(+). FMN contacts are provided by residues 135-137 and 255-256; these read RAS and QA. Residues 270–291 form a disordered region; sequence RRRGSGAHDEIEPAGAGSRRVR. FMN-binding positions include Gly-302, 317–321, and Arg-343; that span reads KPISS.

It belongs to the chorismate synthase family. In terms of assembly, homotetramer. The cofactor is FMNH2.

The catalysed reaction is 5-O-(1-carboxyvinyl)-3-phosphoshikimate = chorismate + phosphate. The protein operates within metabolic intermediate biosynthesis; chorismate biosynthesis; chorismate from D-erythrose 4-phosphate and phosphoenolpyruvate: step 7/7. In terms of biological role, catalyzes the anti-1,4-elimination of the C-3 phosphate and the C-6 proR hydrogen from 5-enolpyruvylshikimate-3-phosphate (EPSP) to yield chorismate, which is the branch point compound that serves as the starting substrate for the three terminal pathways of aromatic amino acid biosynthesis. This reaction introduces a second double bond into the aromatic ring system. This chain is Chorismate synthase, found in Frankia casuarinae (strain DSM 45818 / CECT 9043 / HFP020203 / CcI3).